A 186-amino-acid chain; its full sequence is MDAPASLRGQLLLAMPGIGDPRFEKAVIAMCAHDENGALGVGVDRVMPGITLHGLLEQLDVDPGIAPDCDILLGGPVEQRRGFVLHSTDWLGEDSLLVEDRWCLTSTLDVLRAIAEGKGPARWLVALGYAGWGEGQLDGEMRRHGWLATRAEDGLIFDHRPPRRWEAAMRSAGIDPRLLAATSGQA.

The protein belongs to the UPF0301 (AlgH) family.

This Rhizorhabdus wittichii (strain DSM 6014 / CCUG 31198 / JCM 15750 / NBRC 105917 / EY 4224 / RW1) (Sphingomonas wittichii) protein is UPF0301 protein Swit_2673.